The sequence spans 343 residues: Anthranilate phosphoribosyltransferase (343 aa).

Residues glycine 86, 89 to 90, threonine 94, 96 to 99, 114 to 122, and serine 126 contribute to the 5-phospho-alpha-D-ribose 1-diphosphate site; these read GD, NIST, and KHGNKSASG. Glycine 86 provides a ligand contact to anthranilate. A Mg(2+)-binding site is contributed by serine 98. Residue asparagine 117 coordinates anthranilate. Arginine 172 lines the anthranilate pocket. The Mg(2+) site is built by aspartate 231 and glutamate 232.

It belongs to the anthranilate phosphoribosyltransferase family. In terms of assembly, homodimer. The cofactor is Mg(2+).

It carries out the reaction N-(5-phospho-beta-D-ribosyl)anthranilate + diphosphate = 5-phospho-alpha-D-ribose 1-diphosphate + anthranilate. Its pathway is amino-acid biosynthesis; L-tryptophan biosynthesis; L-tryptophan from chorismate: step 2/5. Functionally, catalyzes the transfer of the phosphoribosyl group of 5-phosphorylribose-1-pyrophosphate (PRPP) to anthranilate to yield N-(5'-phosphoribosyl)-anthranilate (PRA). This is Anthranilate phosphoribosyltransferase from Prochlorococcus marinus subsp. pastoris (strain CCMP1986 / NIES-2087 / MED4).